Consider the following 126-residue polypeptide: Small ribosomal subunit protein uS12m (126 aa).

2 disordered regions span residues 1 to 27 and 106 to 126; these read MPTMNQLVRKGRESKRRTKRTRALNKC and GIPGRRRGRSKYGTKKPKDYI. 2 stretches are compositionally biased toward basic residues: residues 12-23 and 109-120; these read RESKRRTKRTRA and GRRRGRSKYGTK.

It belongs to the universal ribosomal protein uS12 family.

The protein localises to the mitochondrion. Functionally, protein S12 is involved in the translation initiation step. In Marchantia polymorpha (Common liverwort), this protein is Small ribosomal subunit protein uS12m (RPS12).